The chain runs to 301 residues: Glycine--tRNA ligase alpha subunit (301 aa).

The protein belongs to the class-II aminoacyl-tRNA synthetase family. As to quaternary structure, tetramer of two alpha and two beta subunits.

Its subcellular location is the cytoplasm. It carries out the reaction tRNA(Gly) + glycine + ATP = glycyl-tRNA(Gly) + AMP + diphosphate. This chain is Glycine--tRNA ligase alpha subunit, found in Variovorax paradoxus (strain S110).